Reading from the N-terminus, the 251-residue chain is Ditrans,polycis-undecaprenyl-diphosphate synthase ((2E,6E)-farnesyl-diphosphate specific) (251 aa).

The active site involves Asp-21. Asp-21 lines the Mg(2+) pocket. Substrate-binding positions include Gly-22–Arg-25, Trp-26, His-38, and Ser-66–Glu-68. Residue Asn-69 is the Proton acceptor of the active site. Residues Trp-70, Arg-72, Arg-189, and Arg-195–Ser-197 each bind substrate. Glu-208 contributes to the Mg(2+) binding site.

The protein belongs to the UPP synthase family. In terms of assembly, homodimer. Mg(2+) is required as a cofactor.

It catalyses the reaction 8 isopentenyl diphosphate + (2E,6E)-farnesyl diphosphate = di-trans,octa-cis-undecaprenyl diphosphate + 8 diphosphate. Its function is as follows. Catalyzes the sequential condensation of isopentenyl diphosphate (IPP) with (2E,6E)-farnesyl diphosphate (E,E-FPP) to yield (2Z,6Z,10Z,14Z,18Z,22Z,26Z,30Z,34E,38E)-undecaprenyl diphosphate (di-trans,octa-cis-UPP). UPP is the precursor of glycosyl carrier lipid in the biosynthesis of bacterial cell wall polysaccharide components such as peptidoglycan and lipopolysaccharide. The chain is Ditrans,polycis-undecaprenyl-diphosphate synthase ((2E,6E)-farnesyl-diphosphate specific) from Pseudomonas syringae pv. tomato (strain ATCC BAA-871 / DC3000).